The primary structure comprises 127 residues: Glycine cleavage system H protein (127 aa).

Residues 22–104 form the Lipoyl-binding domain; sequence EVVIGITHFA…YEGAWMVKVE (83 aa). An N6-lipoyllysine modification is found at Lys63.

This sequence belongs to the GcvH family. The glycine cleavage system is composed of four proteins: P, T, L and H. It depends on (R)-lipoate as a cofactor.

The glycine cleavage system catalyzes the degradation of glycine. The H protein shuttles the methylamine group of glycine from the P protein to the T protein. Its function is as follows. Is also involved in protein lipoylation via its role as an octanoyl/lipoyl carrier protein intermediate. In Bacillus cereus (strain B4264), this protein is Glycine cleavage system H protein.